Reading from the N-terminus, the 549-residue chain is MKNINPTRTAAWQALQQHFGQMKSVHMRDLFAADADRFSKFSATFDDQMLVDYSKNRINAETLEKLQALARETDLQGAIAAMFAGEKINRTEDRAVLHIALRNRSNTPICVDGKDVMPEVNAVLAKMKQFCVRVIDGEWRGYTGKAITDVVNIGIGGSDLGPYMVTEALRPYKNHLTMHFVSNVDGTHIAETLQRLNPETTLFLVASKTFTTQETMTNAHSARDWFLQAAGDERHVARHFAALSTNVQAVAAFGIDTANMFEFWDWVGGRYSLWSAIGLSIALSIGYDNFEQLLAGAHAMDRHFASAPLPQNLPVLLALIGIWYNNFFGAETEAILPYDQYMHRFPAYFQQGNMESNGKYVDRDGQVVDYQTGPIIWGEPGTNGQHAFYQLIHQGTKLIPCDFIAPAISHNPLGDHHGKLLSNFFAQTEALAFGKSREAVEEEFAKAGKSAAEVQHIVPFKVFEGNRPTNSILLREITPYSLGMLIALYEHKIFTQGVILNIFSFDQWGVELGKQLANRILPELEDAQPVRSHDSSTNALINRFKAWRA.

Glu355 acts as the Proton donor in catalysis. Residues His386 and Lys514 contribute to the active site.

Belongs to the GPI family.

It is found in the cytoplasm. The enzyme catalyses alpha-D-glucose 6-phosphate = beta-D-fructose 6-phosphate. It functions in the pathway carbohydrate biosynthesis; gluconeogenesis. It participates in carbohydrate degradation; glycolysis; D-glyceraldehyde 3-phosphate and glycerone phosphate from D-glucose: step 2/4. Its function is as follows. Catalyzes the reversible isomerization of glucose-6-phosphate to fructose-6-phosphate. This is Glucose-6-phosphate isomerase from Edwardsiella ictaluri (strain 93-146).